The primary structure comprises 492 residues: Cobyric acid synthase (492 aa).

The GATase cobBQ-type domain maps to 253–441 (VLKVIAPVYP…LHGLFDTPQA (189 aa)). The active-site Nucleophile is the C334. H433 is a catalytic residue.

This sequence belongs to the CobB/CobQ family. CobQ subfamily.

The protein operates within cofactor biosynthesis; adenosylcobalamin biosynthesis. Catalyzes amidations at positions B, D, E, and G on adenosylcobyrinic A,C-diamide. NH(2) groups are provided by glutamine, and one molecule of ATP is hydrogenolyzed for each amidation. The chain is Cobyric acid synthase from Azoarcus sp. (strain BH72).